The following is a 228-amino-acid chain: Prepilin leader peptidase/N-methyltransferase (228 aa).

6 helical membrane-spanning segments follow: residues 18–38, 95–115, 116–136, 147–167, 168–188, and 204–224; these read LWGS…NVVI, RYPL…YLMA, PGVP…LAAI, LTLP…YVPL, AEAV…YWVF, and LLAA…LLLA.

This sequence belongs to the peptidase A24 family.

The protein resides in the cell inner membrane. The catalysed reaction is Typically cleaves a -Gly-|-Phe- bond to release an N-terminal, basic peptide of 5-8 residues from type IV prepilin, and then N-methylates the new N-terminal amino group, the methyl donor being S-adenosyl-L-methionine.. Its function is as follows. Plays an essential role in type IV pili and type II pseudopili formation by proteolytically removing the leader sequence from substrate proteins and subsequently monomethylating the alpha-amino group of the newly exposed N-terminal phenylalanine. In Klebsiella pneumoniae, this protein is Prepilin leader peptidase/N-methyltransferase (pulO).